A 185-amino-acid chain; its full sequence is Ribosome-recycling factor (185 aa).

The protein belongs to the RRF family.

It localises to the cytoplasm. Responsible for the release of ribosomes from messenger RNA at the termination of protein biosynthesis. May increase the efficiency of translation by recycling ribosomes from one round of translation to another. The sequence is that of Ribosome-recycling factor from Pelobacter propionicus (strain DSM 2379 / NBRC 103807 / OttBd1).